Consider the following 334-residue polypeptide: Nucleoid-associated protein ESA_01050 (334 aa).

The protein belongs to the YejK family.

The protein resides in the cytoplasm. It localises to the nucleoid. The polypeptide is Nucleoid-associated protein ESA_01050 (Cronobacter sakazakii (strain ATCC BAA-894) (Enterobacter sakazakii)).